The sequence spans 286 residues: 4-diphosphocytidyl-2-C-methyl-D-erythritol kinase (286 aa).

Lys11 is an active-site residue. 93–103 contacts ATP; the sequence is PFGAGLGGGSS. Residue Asp135 is part of the active site.

This sequence belongs to the GHMP kinase family. IspE subfamily.

It carries out the reaction 4-CDP-2-C-methyl-D-erythritol + ATP = 4-CDP-2-C-methyl-D-erythritol 2-phosphate + ADP + H(+). Its pathway is isoprenoid biosynthesis; isopentenyl diphosphate biosynthesis via DXP pathway; isopentenyl diphosphate from 1-deoxy-D-xylulose 5-phosphate: step 3/6. Functionally, catalyzes the phosphorylation of the position 2 hydroxy group of 4-diphosphocytidyl-2C-methyl-D-erythritol. The sequence is that of 4-diphosphocytidyl-2-C-methyl-D-erythritol kinase from Prosthecochloris aestuarii (strain DSM 271 / SK 413).